The following is a 157-amino-acid chain: Ribosome-binding factor A (157 aa).

The disordered stretch occupies residues 127–157 (QQQFGSEDASVEDEVLGDDVADDADETEGKD). A compositionally biased stretch (acidic residues) spans 135 to 157 (ASVEDEVLGDDVADDADETEGKD).

The protein belongs to the RbfA family. As to quaternary structure, monomer. Binds 30S ribosomal subunits, but not 50S ribosomal subunits or 70S ribosomes.

It localises to the cytoplasm. Its function is as follows. One of several proteins that assist in the late maturation steps of the functional core of the 30S ribosomal subunit. Associates with free 30S ribosomal subunits (but not with 30S subunits that are part of 70S ribosomes or polysomes). Required for efficient processing of 16S rRNA. May interact with the 5'-terminal helix region of 16S rRNA. The protein is Ribosome-binding factor A of Shewanella baltica (strain OS155 / ATCC BAA-1091).